The following is a 356-amino-acid chain: L-Lys-D/L-Arg epimerase (356 aa).

Substrate is bound by residues T135 and 160–162 (KVK). D190, E216, and D241 together coordinate Mg(2+). Substrate-binding positions include K266, D296, and 319–321 (DLD).

Belongs to the mandelate racemase/muconate lactonizing enzyme family. Requires Mg(2+) as cofactor.

Catalyzes the epimerization of L-Lys-L-Arg to L-Lys-D-Arg. Can also catalyze the epimerization of other cationic dipeptides, such as L-Arg-L-Arg, L-Lys-L-Lys and L-Lys-L-His, but with lower efficiency (in vitro). This is L-Lys-D/L-Arg epimerase from Methylococcus capsulatus (strain ATCC 33009 / NCIMB 11132 / Bath).